Consider the following 116-residue polypeptide: Protein TCL1B1 (116 aa).

It belongs to the TCL1 family.

The chain is Protein TCL1B1 (Tcl1b1) from Mus musculus (Mouse).